Reading from the N-terminus, the 79-residue chain is Acyl carrier protein (79 aa).

The region spanning 2-77 (ESIEQRVKKI…QAIDYINSHG (76 aa)) is the Carrier domain. Residue Ser37 is modified to O-(pantetheine 4'-phosphoryl)serine.

It belongs to the acyl carrier protein (ACP) family. Post-translationally, 4'-phosphopantetheine is transferred from CoA to a specific serine of apo-ACP by AcpS. This modification is essential for activity because fatty acids are bound in thioester linkage to the sulfhydryl of the prosthetic group.

It localises to the cytoplasm. It functions in the pathway lipid metabolism; fatty acid biosynthesis. Functionally, carrier of the growing fatty acid chain in fatty acid biosynthesis. This is Acyl carrier protein from Bordetella avium (strain 197N).